The following is a 346-amino-acid chain: DnaJ protein ERDJ3B (346 aa).

The first 23 residues, 1–23 (MAIRWSELCIVLFALSYAICVLA), serve as a signal peptide directing secretion. Residues 26-91 (SYYDVLQVPK…EKREIYNKYG (66 aa)) enclose the J domain. N-linked (GlcNAc...) asparagine glycosylation is present at asparagine 267.

In terms of assembly, interacts with SDF2 and MED37A/BIP1. Post-translationally, N-glycosylated. In terms of tissue distribution, expressed in leaves, flower buds and flowers.

It localises to the endoplasmic reticulum lumen. Regulates protein folding in the endoplasmic reticulum (ER) lumen. Forms a complex in the ER with SDF2 and MED37A/BIP1 which is required for the proper accumulation and function of the surface-exposed leucine-rich repeat receptor kinases EFR involved in pathogen-associated molecular pattern (PAMP) triggered immunity. The polypeptide is DnaJ protein ERDJ3B (ERDJ3B) (Arabidopsis thaliana (Mouse-ear cress)).